The primary structure comprises 101 residues: Glutaredoxin-1 (101 aa).

The Glutaredoxin domain occupies 3–101 (DSFVQSKLRD…MMLRQIGALV (99 aa)). A disulfide bridge connects residues cysteine 23 and cysteine 26.

The protein belongs to the glutaredoxin family.

Its subcellular location is the cytoplasm. Functionally, has a glutathione-disulfide oxidoreductase activity in the presence of NADPH and glutathione reductase. Reduces low molecular weight disulfides and proteins. In Gallus gallus (Chicken), this protein is Glutaredoxin-1 (GLRX).